A 1461-amino-acid chain; its full sequence is MGQIHGLSPTPIPKAPRGLSTHHWLNFLQAAYRLQPRPSDFDFQQLRRFLKLALKTPIWLNPIDYSLLASLIPKGYPGRVVEIINILVKNQVSPSAPAAPVPTPICPTTTPPPPPPPSPEAHVPPPYVEPTTTQCFPILHPPGAPSAHRPWQMKDLQAIKQEVSSSALGSPQFMQTLRLAVQQFDPTAKDLQDLLQYLCSSLVVSLHHQQLNTLITEAETRGMTGYNPMAGPLRMQANNPAQQGLRREYQNLWLAAFSTLPGNTRDPSWAAILQGLEEPYCAFVERLNVALDNGLPEGTPKEPILRSLAYSNANKECQKILQARGHTNSPLGEMLRTCQAWTPKDKTKVLVVQPRRPPPTQPCFRCGKVGHWSRDCTQPRPPPGPCPLCQDPSHWKRDCPQLKPPQEEGEPLLLDLPSTSGTTEEKNLLKGGDLISPHPDQDISILPLIPLRQQQQPILGVRISVMGQTPQPTQALLDTGADLTVIPQTLVPGPVKLHDTLILGASGQTNTQFKLLQTPLHIFLPFRRSPVILSSCLLDTHNKWTIIGRDALQQCQGLLYLPDDPSPHQLLPIATPNTIGLEHLPPPPQVDQFPLNLPERLQALNDLVSKALEAGHIEPYSGPGNNPVFPVKKPNGKWRFIHDLRATNAITTTLTSPSPGPPDLTSLPTALPHLQTIDLTDAFFQIPLPKQYQPYFAFTIPQPCNYGPGTRYAWTVLPQGFKNSPTLFEQQLAAVLNPMRKMFPTSTIVQYMDDILLASPTNEELQQLSQLTLQALTTHGLPISQEKTQQTPGQIRFLGQVISPNHITYESTPTIPIKSQWTLTELQVILGEIQWVSKGTPILRKHLQSLYSALHGYRDPRACITLTPQQLHALHAIQQALQHNCRGRLNPALPLLGLISLSTSGTTSVIFQPKQNWPLAWLHTPHPPTSLCPWGHLLACTILTLDKYTLQHYGQLCQSFHHNMSKQALCDFLRNSPHPSVGILIHHMGRFHNLGSQPSGPWKTLLHLPTLLQEPRLLRPIFTLSPVVLDTAPCLFSDGSPQKAAYVLWDQTILQQDITPLPSHETHSAQKGELLALICGLRAAKPWPSLNIFLDSKYLIKYLHSLAIGAFLGTSAHQTLQAALPPLLQGKTIYLHHVRSHTNLPDPISTFNEYTDSLILAPLVPLTPQGLHGLTHCNQRALVSFGATPREAKSLVQTCHTCQTINSQHHMPRGYIRRGLLPNHIWQGDVTHYKYKKYKYCLHVWVDTFSGAVSVSCKKKETSCETISAVLQAISLLGKPLHINTDNGPAFLSQEFQEFCTSYRIKHSTHIPYNPTSSGLVERTNGVIKNLLNKYLLDCPNLPLDNAIHKALWTLNQLNVMNPSGKTRWQIHHSPPLPPIPEASTPPKPPPKWFYYKLPGLTNQRWKGPLQSLQEAAGAALLSIDGSPRWIPWRFLKKAACPRPDASELAEHAATDHQHHG.

Residue Gly-2 is the site of N-myristoyl glycine; by host attachment. The short motif at 94–97 (PSAP) is the PTAP/PSAP motif element. A disordered region spans residues 94–121 (PSAPAAPVPTPICPTTTPPPPPPPSPEA). The span at 97–121 (PAAPVPTPICPTTTPPPPPPPSPEA) shows a compositional bias: pro residues. The PPXY motif signature appears at 124–127 (PPPY). Positions 130–133 (PTTT) match the PTAP/PSAP motif motif. 2 CCHC-type zinc fingers span residues 361–378 (QPCF…DCTQ) and 384–401 (GPCP…DCPQ). The interval 399 to 425 (CPQLKPPQEEGEPLLLDLPSTSGTTEE) is disordered. The 79-residue stretch at 473–551 (TQALLDTGAD…NKWTIIGRDA (79 aa)) folds into the Peptidase A2 domain. Residue Asp-478 is the For protease activity; shared with dimeric partner of the active site. The region spanning 612-802 (LEAGHIEPYS…GQIRFLGQVI (191 aa)) is the Reverse transcriptase domain. Asp-678, Asp-753, Asp-754, Asp-1038, Glu-1073, Asp-1095, Asp-1156, Asp-1229, and Asp-1286 together coordinate Mg(2+). Positions 1029–1164 (LDTAPCLFSD…TDSLILAPLV (136 aa)) constitute an RNase H type-1 domain. The 170-residue stretch at 1218–1387 (RGLLPNHIWQ…PPIPEASTPP (170 aa)) folds into the Integrase catalytic domain. The integrase-type DNA-binding region spans 1392-1441 (KWFYYKLPGLTNQRWKGPLQSLQEAAGAALLSIDGSPRWIPWRFLKKAAC).

As to quaternary structure, homodimer; the homodimers are part of the immature particles. Interacts with human TSG101 and NEDD4; these interactions are essential for budding and release of viral particles. In terms of assembly, homodimer; further assembles as homohexamers. The cofactor is Mg(2+). In terms of processing, phosphorylation of the matrix protein p19 by MAPK1 seems to play a role in budding. Post-translationally, myristoylated. Myristoylation of the matrix (MA) domain mediates the transport and binding of Gag polyproteins to the host plasma membrane and is required for the assembly of viral particles. Specific enzymatic cleavages by the viral protease yield mature proteins. The polyprotein is cleaved during and after budding, this process is termed maturation. The protease is autoproteolytically processed at its N- and C-termini.

It is found in the virion. The enzyme catalyses Endonucleolytic cleavage to 5'-phosphomonoester.. It catalyses the reaction DNA(n) + a 2'-deoxyribonucleoside 5'-triphosphate = DNA(n+1) + diphosphate. Functionally, the matrix domain targets Gag, Gag-Pro and Gag-Pro-Pol polyproteins to the plasma membrane via a multipartite membrane binding signal, that includes its myristoylated N-terminus. Matrix protein. In terms of biological role, forms the spherical core of the virus that encapsulates the genomic RNA-nucleocapsid complex. Its function is as follows. Binds strongly to viral nucleic acids and promote their aggregation. Also destabilizes the nucleic acids duplexes via highly structured zinc-binding motifs. Functionally, the aspartyl protease mediates proteolytic cleavages of Gag and Gag-Pol polyproteins during or shortly after the release of the virion from the plasma membrane. Cleavages take place as an ordered, step-wise cascade to yield mature proteins. This process is called maturation. Displays maximal activity during the budding process just prior to particle release from the cell (Potential). Cleaves the translation initiation factor eIF4G leading to the inhibition of host cap-dependent translation. RT is a multifunctional enzyme that converts the viral RNA genome into dsDNA in the cytoplasm, shortly after virus entry into the cell. This enzyme displays a DNA polymerase activity that can copy either DNA or RNA templates, and a ribonuclease H (RNase H) activity that cleaves the RNA strand of RNA-DNA heteroduplexes in a partially processive 3' to 5'-endonucleasic mode. Conversion of viral genomic RNA into dsDNA requires many steps. A tRNA-Pro binds to the primer-binding site (PBS) situated at the 5'-end of the viral RNA. RT uses the 3' end of the tRNA primer to perform a short round of RNA-dependent minus-strand DNA synthesis. The reading proceeds through the U5 region and ends after the repeated (R) region which is present at both ends of viral RNA. The portion of the RNA-DNA heteroduplex is digested by the RNase H, resulting in a ssDNA product attached to the tRNA primer. This ssDNA/tRNA hybridizes with the identical R region situated at the 3' end of viral RNA. This template exchange, known as minus-strand DNA strong stop transfer, can be either intra- or intermolecular. RT uses the 3' end of this newly synthesized short ssDNA to perform the RNA-dependent minus-strand DNA synthesis of the whole template. RNase H digests the RNA template except for a polypurine tract (PPT) situated at the 5' end of the genome. It is not clear if both polymerase and RNase H activities are simultaneous. RNase H probably can proceed both in a polymerase-dependent (RNA cut into small fragments by the same RT performing DNA synthesis) and a polymerase-independent mode (cleavage of remaining RNA fragments by free RTs). Secondly, RT performs DNA-directed plus-strand DNA synthesis using the PPT that has not been removed by RNase H as primer. PPT and tRNA primers are then removed by RNase H. The 3' and 5' ssDNA PBS regions hybridize to form a circular dsDNA intermediate. Strand displacement synthesis by RT to the PBS and PPT ends produces a blunt ended, linear dsDNA copy of the viral genome that includes long terminal repeats (LTRs) at both ends. In terms of biological role, catalyzes viral DNA integration into the host chromosome, by performing a series of DNA cutting and joining reactions. In Human T-cell leukemia virus 2 (HTLV-2), this protein is Gag-Pro-Pol polyprotein (gag-pro-pol).